Here is a 350-residue protein sequence, read N- to C-terminus: Aminomethyltransferase (350 aa).

Belongs to the GcvT family. In terms of assembly, the glycine cleavage system is composed of four proteins: P, T, L and H.

The enzyme catalyses N(6)-[(R)-S(8)-aminomethyldihydrolipoyl]-L-lysyl-[protein] + (6S)-5,6,7,8-tetrahydrofolate = N(6)-[(R)-dihydrolipoyl]-L-lysyl-[protein] + (6R)-5,10-methylene-5,6,7,8-tetrahydrofolate + NH4(+). Functionally, the glycine cleavage system catalyzes the degradation of glycine. The protein is Aminomethyltransferase of Aquifex aeolicus (strain VF5).